We begin with the raw amino-acid sequence, 210 residues long: Calaxin (210 aa).

3 EF-hand domains span residues T64–G99, T100–R135, and G145–L180. Ca(2+)-binding residues include D77, D79, D81, Y83, E88, D113, N115, D117, Y119, E124, D158, D160, D162, R164, and D169.

As to quaternary structure, component of the outer dynein arm-docking complex along with ODAD1, ODAD2, ODAD3 and ODAD4.

It localises to the cytoplasm. The protein resides in the cytoskeleton. It is found in the cilium axoneme. The protein localises to the cell projection. Its subcellular location is the cilium. It localises to the flagellum. Component of the outer dynein arm-docking complex (ODA-DC) that mediates outer dynein arms (ODA) binding onto the doublet microtubule. Seems to regulate the assembly of both ODAs and their axonemal docking complex onto ciliary microtubules. Regulates ciliary and flagellar motility and is required for cilia-driven determination of body laterality. In terms of biological role, regulates ciliary motility and is required for cilia-driven determination of body laterality. This Danio rerio (Zebrafish) protein is Calaxin (clxn).